Consider the following 192-residue polypeptide: Natural cytotoxicity triggering receptor 3 (192 aa).

The N-terminal stretch at M1–A18 is a signal peptide. In terms of domain architecture, Ig-like spans I19–V126. Residues I19–S147 lie on the Extracellular side of the membrane. A disulfide bond links C39 and C108. Residues N42 and N121 are each glycosylated (N-linked (GlcNAc...) asparagine). Residues L148–I168 form a helical membrane-spanning segment. The Cytoplasmic portion of the chain corresponds to Y169–F192.

It belongs to the natural cytotoxicity receptor (NCR) family. Homodimer in the unliganted form. Interacts with CD3Z. Interacts with and is activated by binding to NCR3LG1. Interacts with and is activated by binding to BAG6. Interacts with and is inhibited by binding to LGALS3.

The protein localises to the cell membrane. Functionally, cell membrane receptor of natural killer/NK cells that is activated by binding of extracellular ligands including BAG6 and NCR3LG1. Stimulates NK cells cytotoxicity toward neighboring cells producing these ligands. It controls, for instance, NK cells cytotoxicity against tumor cells. Engagement of NCR3 by BAG6 also promotes myeloid dendritic cells (DC) maturation, both through killing DCs that did not acquire a mature phenotype, and inducing the release by NK cells of TNFA and IFNG that promote DC maturation. In Rattus norvegicus (Rat), this protein is Natural cytotoxicity triggering receptor 3 (Ncr3).